The primary structure comprises 419 residues: uncharacterized protein (419 aa).

This sequence belongs to the MT-A70-like family.

The protein localises to the cytoplasm. This is an uncharacterized protein from Schizosaccharomyces pombe (strain 972 / ATCC 24843) (Fission yeast).